A 931-amino-acid chain; its full sequence is Protein unc-45 homolog B (931 aa).

TPR repeat units follow at residues 6–39 (AAQL…TKDK), 43–76 (ATLY…NSAD), and 77–110 (IKAL…EPRN). ARM repeat units lie at residues 169 to 208 (EAGA…GMCS), 211 to 250 (RARA…AIID), and 751 to 790 (DKLR…NMVL).

In terms of assembly, interacts with HSP90 in an ATP-independent manner. Interacts with UBE4B; the interaction may target UNC45B for proteasomal degradation. As to expression, highly expressed in adult skeletal muscle and heart. Detected at intermediate levels in lung. Highly expressed in embryonic heart.

It is found in the cytoplasm. The protein resides in the myofibril. It localises to the sarcomere. The protein localises to the z line. Its subcellular location is the a band. It is found in the perinuclear region. The protein resides in the cytosol. Acts as a co-chaperone for HSP90 and is required for proper folding of the myosin motor domain. Plays a role in sarcomere formation during muscle cell development. Is necessary for normal early lens development. In Mus musculus (Mouse), this protein is Protein unc-45 homolog B (Unc45b).